The primary structure comprises 589 residues: Aspartate--tRNA ligase (589 aa).

Glutamate 172 lines the L-aspartate pocket. Positions 196–199 are aspartate; it reads QLFK. L-aspartate is bound at residue arginine 218. ATP-binding positions include 218–220 and glutamine 227; that span reads RDE. Histidine 449 contributes to the L-aspartate binding site. Residue glutamate 483 participates in ATP binding. An L-aspartate-binding site is contributed by arginine 490. ATP is bound at residue 535–538; sequence GLDR.

Belongs to the class-II aminoacyl-tRNA synthetase family. Type 1 subfamily. Homodimer.

The protein localises to the cytoplasm. The catalysed reaction is tRNA(Asp) + L-aspartate + ATP = L-aspartyl-tRNA(Asp) + AMP + diphosphate. In terms of biological role, catalyzes the attachment of L-aspartate to tRNA(Asp) in a two-step reaction: L-aspartate is first activated by ATP to form Asp-AMP and then transferred to the acceptor end of tRNA(Asp). This is Aspartate--tRNA ligase from Actinobacillus succinogenes (strain ATCC 55618 / DSM 22257 / CCUG 43843 / 130Z).